The following is a 180-amino-acid chain: Ribulose bisphosphate carboxylase small subunit 1A, chloroplastic (180 aa).

The transit peptide at 1-54 (MASSMLSSATMVASPAQATMVAPFNGLKSSAAFPATRKANNDITSITSNGGRVN) directs the protein to the chloroplast. Position 113 is a phosphoserine (Ser113).

Belongs to the RuBisCO small chain family. Heterohexadecamer of 8 large and 8 small subunits.

It is found in the plastid. The protein localises to the chloroplast membrane. The protein resides in the chloroplast stroma. Functionally, ruBisCO catalyzes two reactions: the carboxylation of D-ribulose 1,5-bisphosphate, the primary event in carbon dioxide fixation, as well as the oxidative fragmentation of the pentose substrate. Both reactions occur simultaneously and in competition at the same active site. Although the small subunit is not catalytic it is essential for maximal activity. The sequence is that of Ribulose bisphosphate carboxylase small subunit 1A, chloroplastic (RBCS-1A) from Arabidopsis thaliana (Mouse-ear cress).